The sequence spans 688 residues: Polyribonucleotide nucleotidyltransferase (688 aa).

Mg(2+) contacts are provided by Asp484 and Asp490. The region spanning 550–609 (PTTEIFNVAPDKIIEIIGQGGRVIREIVEKFEVKIDLNKPSGEVKIMGNKERVLKTKEFI) is the KH domain. Residues 626 to 688 (DEVLEAQVKR…NKGKIALDLA (63 aa)) enclose the S1 motif domain.

It belongs to the polyribonucleotide nucleotidyltransferase family. Mg(2+) is required as a cofactor.

It localises to the cytoplasm. The catalysed reaction is RNA(n+1) + phosphate = RNA(n) + a ribonucleoside 5'-diphosphate. Involved in mRNA degradation. Catalyzes the phosphorolysis of single-stranded polyribonucleotides processively in the 3'- to 5'-direction. In Helicobacter acinonychis (strain Sheeba), this protein is Polyribonucleotide nucleotidyltransferase.